Reading from the N-terminus, the 73-residue chain is Large ribosomal subunit protein bL32c (73 aa).

Belongs to the bacterial ribosomal protein bL32 family.

The protein localises to the plastid. It is found in the chloroplast. This chain is Large ribosomal subunit protein bL32c, found in Jasminum nudiflorum (Winter jasmine).